The sequence spans 299 residues: Oxygen-dependent coproporphyrinogen-III oxidase (299 aa).

Serine 92 contacts substrate. The a divalent metal cation site is built by histidine 96 and histidine 106. Residue histidine 106 is the Proton donor of the active site. 108-110 provides a ligand contact to substrate; the sequence is NVR. Residues histidine 145 and histidine 175 each coordinate a divalent metal cation. An important for dimerization region spans residues 240 to 275; it reads YVEFNLVWDRGTLFGLQTGGRTESILMSMPPLVRWE. 258–260 serves as a coordination point for substrate; it reads GGR.

Belongs to the aerobic coproporphyrinogen-III oxidase family. Homodimer. The cofactor is a divalent metal cation.

The protein resides in the cytoplasm. It catalyses the reaction coproporphyrinogen III + O2 + 2 H(+) = protoporphyrinogen IX + 2 CO2 + 2 H2O. Its pathway is porphyrin-containing compound metabolism; protoporphyrin-IX biosynthesis; protoporphyrinogen-IX from coproporphyrinogen-III (O2 route): step 1/1. Its function is as follows. Involved in the heme biosynthesis. Catalyzes the aerobic oxidative decarboxylation of propionate groups of rings A and B of coproporphyrinogen-III to yield the vinyl groups in protoporphyrinogen-IX. The protein is Oxygen-dependent coproporphyrinogen-III oxidase of Salmonella arizonae (strain ATCC BAA-731 / CDC346-86 / RSK2980).